A 90-amino-acid chain; its full sequence is MNYFAVLCIFSCICLWQFSDAAPFISVQSSSQSRSQKVMNGMLRTLYDYSVQDSVNDATGHLIHTHKADFNSDVMSPEEIERVRQQLNMA.

The first 21 residues, 1 to 21 (MNYFAVLCIFSCICLWQFSDA), serve as a signal peptide directing secretion.

Main cells of the accessory glands of males.

The protein resides in the secreted. The protein localises to the extracellular space. In terms of biological role, this protein is transferred from male to female during mating and may affect egglaying and behavior after mating. This Drosophila mauritiana (Fruit fly) protein is Accessory gland-specific peptide 26Ab (Acp26Ab).